The primary structure comprises 187 residues: UPF0301 protein PMI0339 (187 aa).

This sequence belongs to the UPF0301 (AlgH) family.

This chain is UPF0301 protein PMI0339, found in Proteus mirabilis (strain HI4320).